A 297-amino-acid polypeptide reads, in one-letter code: Probable endonuclease 4 (297 aa).

H69, H110, E145, D179, H182, H214, D227, H229, and E259 together coordinate Zn(2+).

This sequence belongs to the AP endonuclease 2 family. Requires Zn(2+) as cofactor.

It catalyses the reaction Endonucleolytic cleavage to 5'-phosphooligonucleotide end-products.. In terms of biological role, endonuclease IV plays a role in DNA repair. It cleaves phosphodiester bonds at apurinic or apyrimidinic (AP) sites, generating a 3'-hydroxyl group and a 5'-terminal sugar phosphate. The sequence is that of Probable endonuclease 4 from Oceanobacillus iheyensis (strain DSM 14371 / CIP 107618 / JCM 11309 / KCTC 3954 / HTE831).